The primary structure comprises 526 residues: GMP synthase [glutamine-hydrolyzing] (526 aa).

Residues 8–208 (CILIIDFGSQ…AVDICRCEVT (201 aa)) form the Glutamine amidotransferase type-1 domain. Residue C85 is the Nucleophile of the active site. Residues H182 and E184 contribute to the active site. The GMPS ATP-PPase domain maps to 209 to 401 (WKPVYIVKNI…LGLPLNVVNQ (193 aa)). 236 to 242 (SGGIDSL) lines the ATP pocket.

In terms of assembly, homodimer.

It catalyses the reaction XMP + L-glutamine + ATP + H2O = GMP + L-glutamate + AMP + diphosphate + 2 H(+). The protein operates within purine metabolism; GMP biosynthesis; GMP from XMP (L-Gln route): step 1/1. Functionally, catalyzes the synthesis of GMP from XMP. The sequence is that of GMP synthase [glutamine-hydrolyzing] from Blochmanniella floridana.